The chain runs to 606 residues: Kelch repeat and BTB domain-containing protein 8 (606 aa).

The BTB domain maps to 55–123; the sequence is TDIVVQVDHG…AYTSRVQLTE (69 aa). The BACK domain occupies 158 to 258; that stretch reads CIGVFSFADH…PLMEETFVEQ (101 aa). Kelch repeat units follow at residues 342-396, 397-447, 449-487, 488-534, and 546-593; these read ELYI…HCCG, KLYA…EYKD, IYIL…VYKD, SIYY…KLVV, and TQVS…FECA.

It belongs to the KBTBD8 family. In terms of assembly, component of the BCR(KBTBD8) E3 ubiquitin ligase complex.

The protein localises to the cytoplasm. It is found in the cytoskeleton. Its subcellular location is the spindle. It localises to the golgi apparatus. Its function is as follows. Substrate-specific adapter of a BCR (BTB-CUL3-RBX1) E3 ubiquitin ligase complex that acts as a regulator of neural crest specification. The BCR(KBTBD8) complex acts by mediating monoubiquitination of target proteins. The protein is Kelch repeat and BTB domain-containing protein 8 (kbtbd8) of Xenopus tropicalis (Western clawed frog).